We begin with the raw amino-acid sequence, 550 residues long: Glucose-6-phosphate isomerase (550 aa).

E357 (proton donor) is an active-site residue. Residues H388 and K516 contribute to the active site.

This sequence belongs to the GPI family.

Its subcellular location is the cytoplasm. It catalyses the reaction alpha-D-glucose 6-phosphate = beta-D-fructose 6-phosphate. It participates in carbohydrate biosynthesis; gluconeogenesis. The protein operates within carbohydrate degradation; glycolysis; D-glyceraldehyde 3-phosphate and glycerone phosphate from D-glucose: step 2/4. Functionally, catalyzes the reversible isomerization of glucose-6-phosphate to fructose-6-phosphate. In Psychromonas ingrahamii (strain DSM 17664 / CCUG 51855 / 37), this protein is Glucose-6-phosphate isomerase.